The following is a 448-amino-acid chain: Probable glycine dehydrogenase (decarboxylating) subunit 1 (448 aa).

This sequence belongs to the GcvP family. N-terminal subunit subfamily. In terms of assembly, the glycine cleavage system is composed of four proteins: P, T, L and H. In this organism, the P 'protein' is a heterodimer of two subunits.

It carries out the reaction N(6)-[(R)-lipoyl]-L-lysyl-[glycine-cleavage complex H protein] + glycine + H(+) = N(6)-[(R)-S(8)-aminomethyldihydrolipoyl]-L-lysyl-[glycine-cleavage complex H protein] + CO2. Its function is as follows. The glycine cleavage system catalyzes the degradation of glycine. The P protein binds the alpha-amino group of glycine through its pyridoxal phosphate cofactor; CO(2) is released and the remaining methylamine moiety is then transferred to the lipoamide cofactor of the H protein. The protein is Probable glycine dehydrogenase (decarboxylating) subunit 1 of Bacillus velezensis (strain DSM 23117 / BGSC 10A6 / LMG 26770 / FZB42) (Bacillus amyloliquefaciens subsp. plantarum).